The primary structure comprises 301 residues: Aldose reductase (301 aa).

Residue 11 to 20 (GKEIPTVGLG) coordinates NADP(+). Catalysis depends on Y51, which acts as the Proton donor. H111 is a binding site for substrate. NADP(+) is bound at residue 209 to 266 (SSLGSAPGSSAKVRDDKTIKAIAKKYGCAPSQIILSYITAQGICVIPKSRSKEHLREN).

It belongs to the aldo/keto reductase family.

It localises to the cytoplasm. It catalyses the reaction an alditol + NAD(+) = an aldose + NADH + H(+). The enzyme catalyses an alditol + NADP(+) = an aldose + NADPH + H(+). In terms of biological role, catalyzes the NADPH-dependent reduction of a wide variety of carbonyl-containing compounds to their corresponding alcohols with a broad range of catalytic efficiencies. The polypeptide is Aldose reductase (Encephalitozoon cuniculi (strain GB-M1) (Microsporidian parasite)).